The primary structure comprises 211 residues: DNA-directed RNA polymerases I, II, and III subunit RPABC1 (211 aa).

It belongs to the archaeal Rpo5/eukaryotic RPB5 RNA polymerase subunit family. In terms of assembly, component of the RNA polymerase I (Pol I), RNA polymerase II (Pol II) and RNA polymerase III (Pol III) complexes consisting of at least 13, 12 and 17 subunits, respectively. In RNA Pol II, this subunit is present in 2-fold molar excess over the other subunits.

The protein localises to the nucleus. Functionally, DNA-dependent RNA polymerase catalyzes the transcription of DNA into RNA using the four ribonucleoside triphosphates as substrates. Common component of RNA polymerases I, II and III which synthesize ribosomal RNA precursors, mRNA precursors and many functional non-coding RNAs, and small RNAs, such as 5S rRNA and tRNAs, respectively. Pol II is the central component of the basal RNA polymerase II transcription machinery. Pols are composed of mobile elements that move relative to each other. In Pol II, RPB5 is part of the lower jaw surrounding the central large cleft and thought to grab the incoming DNA template. Seems to be the major component in this process. The sequence is that of DNA-directed RNA polymerases I, II, and III subunit RPABC1 (rpb-5) from Caenorhabditis elegans.